A 451-amino-acid chain; its full sequence is Photosystem II CP43 reaction center protein (451 aa).

Residues 1–46 (ATNRDQESSGFAWWAGNARLINLSGKLLGAHVAHAGLIVFWAGAMT) are Cytoplasmic-facing. Residues tryptophan 13, leucine 27, and alanine 30 each coordinate chlorophyll a. The helical transmembrane segment at 47-71 (LFELAHFIPEKPMYEQGLILIPHIA) threads the bilayer. At 72–111 (TLGWGVGPGGEVVDTFPFFVVGVVHLISSAVLGFGGVYHA) the chain is on the lumenal side. 2 residues coordinate chlorophyll a: valine 92 and glycine 106. A helical transmembrane segment spans residues 112–133 (IRGPETLEEYSSFFGYDWKDKN). Over 134–155 (KMTTILGFHLIVLGIGALLLVA) the chain is Cytoplasmic. Isoleucine 138 contacts chlorophyll a. The chain crosses the membrane as a helical span at residues 156 to 178 (KAMFFGGLYDTWAPGGGDVRVIT). Residues 179–232 (NPTLDPRVIFGYLLKSPFGGEGWIVSVNNLEDVVGGHIWIGLICIAGGIWHILT) are Lumenal-facing. Chlorophyll a contacts are provided by valine 211 and glycine 225. A helical transmembrane segment spans residues 233–253 (TPFGWARRAFIWSGEAYLSYS). Over 254-268 (LGALSMMGFIATCFV) the chain is Cytoplasmic. A helical transmembrane segment spans residues 269–290 (WFNNTVYPSEFYGPTGPEASQA). The Lumenal portion of the chain corresponds to 291–424 (QAMTFLIRDQ…FLVGHLWHAG (134 aa)). Residue glutamate 345 participates in [CaMn4O5] cluster binding. Leucine 404, phenylalanine 415, and glycine 418 together coordinate chlorophyll a. The chain crosses the membrane as a helical span at residues 425–449 (RARAAAAGFEKGIDRESEPVLSMPS). The Cytoplasmic portion of the chain corresponds to 450–451 (LD).

Belongs to the PsbB/PsbC family. PsbC subfamily. As to quaternary structure, PSII is composed of 1 copy each of membrane proteins PsbA, PsbB, PsbC, PsbD, PsbE, PsbF, PsbH, PsbI, PsbJ, PsbK, PsbL, PsbM, PsbT, PsbX, PsbY, PsbZ, Psb30/Ycf12, peripheral proteins PsbO, CyanoQ (PsbQ), PsbU, PsbV and a large number of cofactors. It forms dimeric complexes. The cofactor is Binds multiple chlorophylls and provides some of the ligands for the Ca-4Mn-5O cluster of the oxygen-evolving complex. It may also provide a ligand for a Cl- that is required for oxygen evolution. PSII binds additional chlorophylls, carotenoids and specific lipids..

Its subcellular location is the cellular thylakoid membrane. In terms of biological role, one of the components of the core complex of photosystem II (PSII). It binds chlorophyll and helps catalyze the primary light-induced photochemical processes of PSII. PSII is a light-driven water:plastoquinone oxidoreductase, using light energy to abstract electrons from H(2)O, generating O(2) and a proton gradient subsequently used for ATP formation. In Thermostichus vulcanus (Synechococcus vulcanus), this protein is Photosystem II CP43 reaction center protein.